A 122-amino-acid chain; its full sequence is Small ribosomal subunit protein uS13 (122 aa).

Residues 89-122 (GLRHRRGLPARGQRTKTNARTRKGPRRGVAGKRK) are disordered.

It belongs to the universal ribosomal protein uS13 family. As to quaternary structure, part of the 30S ribosomal subunit. Forms a loose heterodimer with protein S19. Forms two bridges to the 50S subunit in the 70S ribosome.

Located at the top of the head of the 30S subunit, it contacts several helices of the 16S rRNA. In the 70S ribosome it contacts the 23S rRNA (bridge B1a) and protein L5 of the 50S subunit (bridge B1b), connecting the 2 subunits; these bridges are implicated in subunit movement. Contacts the tRNAs in the A and P-sites. The sequence is that of Small ribosomal subunit protein uS13 from Oleidesulfovibrio alaskensis (strain ATCC BAA-1058 / DSM 17464 / G20) (Desulfovibrio alaskensis).